The primary structure comprises 273 residues: Dermonecrotic toxin LdSicTox-alphaIB3av (273 aa).

The active site involves His5. Mg(2+)-binding residues include Glu25 and Asp27. The active-site Nucleophile is His41. 2 disulfide bridges follow: Cys45-Cys51 and Cys47-Cys190. Position 85 (Asp85) interacts with Mg(2+).

It belongs to the arthropod phospholipase D family. Class II subfamily. Mg(2+) is required as a cofactor. Expressed by the venom gland.

It is found in the secreted. The catalysed reaction is an N-(acyl)-sphingosylphosphocholine = an N-(acyl)-sphingosyl-1,3-cyclic phosphate + choline. The enzyme catalyses an N-(acyl)-sphingosylphosphoethanolamine = an N-(acyl)-sphingosyl-1,3-cyclic phosphate + ethanolamine. It carries out the reaction a 1-acyl-sn-glycero-3-phosphocholine = a 1-acyl-sn-glycero-2,3-cyclic phosphate + choline. It catalyses the reaction a 1-acyl-sn-glycero-3-phosphoethanolamine = a 1-acyl-sn-glycero-2,3-cyclic phosphate + ethanolamine. Dermonecrotic toxins cleave the phosphodiester linkage between the phosphate and headgroup of certain phospholipids (sphingolipid and lysolipid substrates), forming an alcohol (often choline) and a cyclic phosphate. This toxin acts on sphingomyelin (SM). It may also act on ceramide phosphoethanolamine (CPE), lysophosphatidylcholine (LPC) and lysophosphatidylethanolamine (LPE), but not on lysophosphatidylserine (LPS), and lysophosphatidylglycerol (LPG). It acts by transphosphatidylation, releasing exclusively cyclic phosphate products as second products. Induces dermonecrosis, hemolysis, increased vascular permeability, edema, inflammatory response, and platelet aggregation. The protein is Dermonecrotic toxin LdSicTox-alphaIB3av of Loxosceles deserta (Desert recluse spider).